Reading from the N-terminus, the 295-residue chain is Ankyrin repeat and SOCS box protein 17 (295 aa).

The ANK repeat unit spans residues 146 to 176 (SGITPLLYVAQTRQSNILKILLQYGILEREK). The 64-residue stretch at 232-295 (LGRRPIISNW…RLQKYLNLES (64 aa)) folds into the SOCS box domain.

Belongs to the ankyrin SOCS box (ASB) family.

Its pathway is protein modification; protein ubiquitination. Functionally, may be a substrate-recognition component of a SCF-like ECS (Elongin-Cullin-SOCS-box protein) E3 ubiquitin-protein ligase complex which mediates the ubiquitination and subsequent proteasomal degradation of target proteins. This Canis lupus familiaris (Dog) protein is Ankyrin repeat and SOCS box protein 17 (ASB17).